The chain runs to 446 residues: Tubulin alpha chain-like 3 (446 aa).

The MREC motif motif lies at 1–4 (MREC). Glutamine 11, glutamate 78, serine 147, glycine 151, threonine 152, threonine 186, asparagine 213, and asparagine 235 together coordinate GTP. Glutamate 78 contributes to the Mg(2+) binding site. Glutamate 261 is an active-site residue.

Belongs to the tubulin family. As to quaternary structure, dimer of alpha and beta chains. A typical microtubule is a hollow water-filled tube with an outer diameter of 25 nm and an inner diameter of 15 nM. Alpha-beta heterodimers associate head-to-tail to form protofilaments running lengthwise along the microtubule wall with the beta-tubulin subunit facing the microtubule plus end conferring a structural polarity. Microtubules usually have 13 protofilaments but different protofilament numbers can be found in some organisms and specialized cells. Mg(2+) serves as cofactor. In terms of processing, some glutamate residues at the C-terminus are polyglutamylated, resulting in polyglutamate chains on the gamma-carboxyl group. Polyglutamylation plays a key role in microtubule severing by spastin (SPAST). SPAST preferentially recognizes and acts on microtubules decorated with short polyglutamate tails: severing activity by SPAST increases as the number of glutamates per tubulin rises from one to eight, but decreases beyond this glutamylation threshold. Glutamylation is also involved in cilia motility. Some glutamate residues at the C-terminus are monoglycylated but not polyglycylated due to the absence of functional TTLL10 in human. Monoglycylation is mainly limited to tubulin incorporated into cilia and flagella axonemes, which is required for their stability and maintenance. Flagella glycylation controls sperm motility. Both polyglutamylation and monoglycylation can coexist on the same protein on adjacent residues, and lowering glycylation levels increases polyglutamylation, and reciprocally.

The protein localises to the cytoplasm. The protein resides in the cytoskeleton. The catalysed reaction is GTP + H2O = GDP + phosphate + H(+). Tubulin is the major constituent of microtubules, a cylinder consisting of laterally associated linear protofilaments composed of alpha- and beta-tubulin heterodimers. Microtubules grow by the addition of GTP-tubulin dimers to the microtubule end, where a stabilizing cap forms. Below the cap, tubulin dimers are in GDP-bound state, owing to GTPase activity of alpha-tubulin. This Homo sapiens (Human) protein is Tubulin alpha chain-like 3 (TUBAL3).